The chain runs to 77 residues: uncharacterized protein (77 aa).

2 helical membrane-spanning segments follow: residues 22 to 42 and 44 to 64; these read VFAN…LPVG and LIGL…FFLG.

It is found in the cell membrane. This is an uncharacterized protein from Methanocaldococcus jannaschii (strain ATCC 43067 / DSM 2661 / JAL-1 / JCM 10045 / NBRC 100440) (Methanococcus jannaschii).